Consider the following 729-residue polypeptide: Replication restart protein PriA (729 aa).

The Helicase ATP-binding domain occupies 209–376 (QTALGRFRSF…QSGAYRLLQL (168 aa)). 222–229 (GITGSGKT) lines the ATP pocket. Residues 319–322 (DEEH) carry the DEAH box motif. Zn(2+) is bound by residues cysteine 436, cysteine 439, cysteine 445, cysteine 448, cysteine 463, cysteine 466, cysteine 476, and cysteine 479. Residues 471-623 (PIPFKCPDCG…YAVFAENELN (153 aa)) form the Helicase C-terminal domain.

It belongs to the helicase family. PriA subfamily. In terms of assembly, interacts with PriB with high affinity in the absence of DNA. Component of the replication restart primosome. Zn(2+) is required as a cofactor.

It catalyses the reaction Couples ATP hydrolysis with the unwinding of duplex DNA by translocating in the 3'-5' direction.. The enzyme catalyses ATP + H2O = ADP + phosphate + H(+). Helicase and ATPase activities on forked DNA are stimulated by PriB; E.coli PriB does not stimulate this helicase. PriA:PriB complex-catalyzed duplex DNA winding is inhibited by CGS 15943 (CHEBI:131351). CGS 15943 decreases ATP hydrolysis and decreases PriA's affinity for DNA. Initiates the restart of stalled replication forks, which reloads the replicative helicase on sites other than the origin of replication. Recognizes and binds to abandoned replication forks and remodels them to uncover a helicase loading site. Promotes assembly of the primosome at these replication forks. Its function is as follows. DNA helicase with greatest unwinding activity on forked DNA substrates with relatively short duplex lagging strand arms. A DNA-dependent ATPase. Required for DNA transformation and DNA repair. Binds single-stranded (ss)DNA and replication fork-like DNA but not double-stranded (ds)DNA. The protein is Replication restart protein PriA of Neisseria gonorrhoeae (strain ATCC 700825 / FA 1090).